The following is a 727-amino-acid chain: Protein TITANIA (727 aa).

The disordered stretch occupies residues Met1 to Ala136. The segment covering Gly14–Pro25 has biased composition (pro residues). Residues Asp67–Pro88 show a composition bias toward basic and acidic residues. A compositionally biased stretch (low complexity) spans Asp104–Pro117. A PHD-type zinc finger spans residues Ala406–Ser470. Residues Val629–Ser697 adopt a coiled-coil conformation.

As to expression, widely expressed.

The protein localises to the nucleus. Its function is as follows. Probable transcription factor that functions as a regulator of metal transporter genes responsible for essential metals delivery to shoots and normal plant growth. Required for the maintenance of metal transporter gene expression, such as IRT1, IRT2, ZIP1, ZIP9, NRAMP1 and NRAMP5. In Oryza sativa subsp. japonica (Rice), this protein is Protein TITANIA.